Here is a 137-residue protein sequence, read N- to C-terminus: Large ribosomal subunit protein uL16 (137 aa).

Belongs to the universal ribosomal protein uL16 family. Part of the 50S ribosomal subunit.

Functionally, binds 23S rRNA and is also seen to make contacts with the A and possibly P site tRNAs. The protein is Large ribosomal subunit protein uL16 of Streptococcus sanguinis (strain SK36).